A 1087-amino-acid polypeptide reads, in one-letter code: Transcription factor AP2-Z (1087 aa).

The AP2 DNA-binding region spans 586 to 682 (GRVYKVIVRG…IKYNSVPDSL (97 aa)).

The protein belongs to the AP2/ERF transcription factor family. AP2 subfamily.

It is found in the nucleus. It localises to the chromosome. Transcription factor which binds the 5'-[TC][AC]TG[AT]AC[AG]-3' motif. During the mosquito vector stage, plays an essential role in the zygote for de novo transcription of genes required for ookinete formation. This Plasmodium berghei (strain Anka) protein is Transcription factor AP2-Z.